Here is a 948-residue protein sequence, read N- to C-terminus: Coiled-coil domain-containing protein 66 (948 aa).

Phosphothreonine is present on residues T115 and T121. S369 carries the phosphoserine modification. The segment at D458–R499 is disordered. The stretch at H467–K558 forms a coiled coil. The segment at G570 to F948 is mediates localization to cilia, centrosomes and spindle microtubules and the interaction with PCM1, CEP290, CEP104 and CSPP1. A Phosphoserine modification is found at S606. Disordered stretches follow at residues Q690–I713 and S788–Q808.

As to quaternary structure, homodimer; disulfide-linked. Interacts with CEP290. Interacts with PCM1. Interacts with ARMC9, TOGARAM1, CSPP1 and CEP104. Interacts with CDK5RAP2, CEP152, CEP192, TBG1 and PRC1. In terms of tissue distribution, widely expressed (at protein level). Expressed in retina, mainly in photoreceptors but also in outer plexiform and ganglion cell layers (at protein level).

It localises to the cytoplasm. The protein resides in the cytoskeleton. The protein localises to the microtubule organizing center. Its subcellular location is the centrosome. It is found in the centriolar satellite. It localises to the cell projection. The protein resides in the cilium. The protein localises to the cilium basal body. Its subcellular location is the cilium axoneme. It is found in the photoreceptor inner segment. It localises to the photoreceptor outer segment. The protein resides in the spindle. The protein localises to the midbody. Its function is as follows. Microtubule-binding protein required for ciliogenesis. May function in ciliogenesis by mediating the transport of proteins like BBS4 to the cilium, but also through the organization of the centriolar satellites. Required for the assembly of signaling-competent cilia with proper structure and length. Mediates this function in part by regulating transition zone assembly and basal body recruitment of the IFT-B complex. Cooperates with the ciliopathy proteins CSPP1 and CEP104 during cilium length regulation. Plays two important roles during cell division. First, is required for mitotic progression via regulation of spindle assembly, organization and orientation, levels of spindle microtubules (MTs), kinetochore-fiber integrity, and chromosome alignment. Second, functions during cytokinesis in part by regulating assembly and organization of central spindle and midbody MTs. Plays a role in retina morphogenesis and/or homeostasis. This Homo sapiens (Human) protein is Coiled-coil domain-containing protein 66.